The following is a 640-amino-acid chain: Threonine--tRNA ligase (640 aa).

Residues 1–61 (MPAITLPDGS…DADARLRFIT (61 aa)) enclose the TGS domain. Positions 243–536 (DHRKIGRQMD…LIENCAGRFP (294 aa)) are catalytic. Zn(2+)-binding residues include Cys-336, His-387, and His-513.

This sequence belongs to the class-II aminoacyl-tRNA synthetase family. In terms of assembly, homodimer. It depends on Zn(2+) as a cofactor.

It localises to the cytoplasm. It carries out the reaction tRNA(Thr) + L-threonine + ATP = L-threonyl-tRNA(Thr) + AMP + diphosphate + H(+). In terms of biological role, catalyzes the attachment of threonine to tRNA(Thr) in a two-step reaction: L-threonine is first activated by ATP to form Thr-AMP and then transferred to the acceptor end of tRNA(Thr). Also edits incorrectly charged L-seryl-tRNA(Thr). The chain is Threonine--tRNA ligase from Acidiphilium cryptum (strain JF-5).